Here is a 97-residue protein sequence, read N- to C-terminus: DNA/RNA-binding protein Alba (97 aa).

Lys-15 carries the N6-acetyllysine modification.

It belongs to the histone-like Alba family. In terms of processing, acetylated. Acetylation at Lys-15 decreases DNA-binding affinity.

It is found in the cytoplasm. It localises to the chromosome. Functionally, binds double-stranded DNA tightly but without sequence specificity. Involved in DNA compaction. This is DNA/RNA-binding protein Alba from Sulfolobus acidocaldarius (strain ATCC 33909 / DSM 639 / JCM 8929 / NBRC 15157 / NCIMB 11770).